A 588-amino-acid polypeptide reads, in one-letter code: Ribonuclease Y (588 aa).

A helical membrane pass occupies residues 7–27 (VLLVAVLLLALIVLGAVLVGV). The disordered stretch occupies residues 130-162 (ARRSGEREAAVLATTTREQAAEVERRAARMDDR). Residues 148–162 (QAAEVERRAARMDDR) show a composition bias toward basic and acidic residues. In terms of domain architecture, KH spans 278–359 (VVSVLHLPGD…HRIEEVHDLA (82 aa)). Residues 404–497 (VLKHLVETAH…TQASDACSGG (94 aa)) enclose the HD domain.

It belongs to the RNase Y family.

It localises to the cell membrane. Endoribonuclease that initiates mRNA decay. The chain is Ribonuclease Y from Salinispora arenicola (strain CNS-205).